The chain runs to 425 residues: UDP-N-acetylglucosamine 1-carboxyvinyltransferase (425 aa).

23–24 (KN) provides a ligand contact to phosphoenolpyruvate. A UDP-N-acetyl-alpha-D-glucosamine-binding site is contributed by Arg-100. Cys-124 serves as the catalytic Proton donor. A 2-(S-cysteinyl)pyruvic acid O-phosphothioketal modification is found at Cys-124. Asp-313 and Ile-335 together coordinate UDP-N-acetyl-alpha-D-glucosamine.

The protein belongs to the EPSP synthase family. MurA subfamily.

It is found in the cytoplasm. The enzyme catalyses phosphoenolpyruvate + UDP-N-acetyl-alpha-D-glucosamine = UDP-N-acetyl-3-O-(1-carboxyvinyl)-alpha-D-glucosamine + phosphate. It participates in cell wall biogenesis; peptidoglycan biosynthesis. In terms of biological role, cell wall formation. Adds enolpyruvyl to UDP-N-acetylglucosamine. This Wolbachia sp. subsp. Drosophila simulans (strain wRi) protein is UDP-N-acetylglucosamine 1-carboxyvinyltransferase.